Reading from the N-terminus, the 442-residue chain is Cytokine receptor-like factor 3 (442 aa).

Residues 10–46 adopt a coiled-coil conformation; it reads EVLLQEARENVEAAQSYRRELGQRLQGLREAQRQIKE. The Fibronectin type-III domain maps to 181-274; it reads PPVQIEELIE…PQTGHSTLVP (94 aa).

This sequence belongs to the cytokine receptor-like factor 3 family.

It localises to the cytoplasm. May play a role in the negative regulation of cell cycle progression. In Mus musculus (Mouse), this protein is Cytokine receptor-like factor 3 (Crlf3).